The following is a 265-amino-acid chain: uncharacterized protein (265 aa).

This is an uncharacterized protein from Autographa californica nuclear polyhedrosis virus (AcMNPV).